The sequence spans 316 residues: 4-hydroxy-3-methylbut-2-enyl diphosphate reductase (316 aa).

Cys12 contacts [4Fe-4S] cluster. (2E)-4-hydroxy-3-methylbut-2-enyl diphosphate-binding residues include His41 and His74. Dimethylallyl diphosphate is bound by residues His41 and His74. His41 and His74 together coordinate isopentenyl diphosphate. Cys96 provides a ligand contact to [4Fe-4S] cluster. (2E)-4-hydroxy-3-methylbut-2-enyl diphosphate is bound at residue His124. His124 lines the dimethylallyl diphosphate pocket. Residue His124 coordinates isopentenyl diphosphate. The Proton donor role is filled by Glu126. Thr167 is a (2E)-4-hydroxy-3-methylbut-2-enyl diphosphate binding site. A [4Fe-4S] cluster-binding site is contributed by Cys197. (2E)-4-hydroxy-3-methylbut-2-enyl diphosphate is bound by residues Ser225, Ser226, Asn227, and Ser269. Ser225, Ser226, Asn227, and Ser269 together coordinate dimethylallyl diphosphate. The isopentenyl diphosphate site is built by Ser225, Ser226, Asn227, and Ser269.

It belongs to the IspH family. In terms of assembly, homodimer. Requires [4Fe-4S] cluster as cofactor.

The catalysed reaction is isopentenyl diphosphate + 2 oxidized [2Fe-2S]-[ferredoxin] + H2O = (2E)-4-hydroxy-3-methylbut-2-enyl diphosphate + 2 reduced [2Fe-2S]-[ferredoxin] + 2 H(+). It catalyses the reaction dimethylallyl diphosphate + 2 oxidized [2Fe-2S]-[ferredoxin] + H2O = (2E)-4-hydroxy-3-methylbut-2-enyl diphosphate + 2 reduced [2Fe-2S]-[ferredoxin] + 2 H(+). It functions in the pathway isoprenoid biosynthesis; dimethylallyl diphosphate biosynthesis; dimethylallyl diphosphate from (2E)-4-hydroxy-3-methylbutenyl diphosphate: step 1/1. The protein operates within isoprenoid biosynthesis; isopentenyl diphosphate biosynthesis via DXP pathway; isopentenyl diphosphate from 1-deoxy-D-xylulose 5-phosphate: step 6/6. In terms of biological role, catalyzes the conversion of 1-hydroxy-2-methyl-2-(E)-butenyl 4-diphosphate (HMBPP) into a mixture of isopentenyl diphosphate (IPP) and dimethylallyl diphosphate (DMAPP). Acts in the terminal step of the DOXP/MEP pathway for isoprenoid precursor biosynthesis. This chain is 4-hydroxy-3-methylbut-2-enyl diphosphate reductase, found in Pectobacterium carotovorum subsp. carotovorum (strain PC1).